A 122-amino-acid chain; its full sequence is Large ribosomal subunit protein uL14 (122 aa).

Belongs to the universal ribosomal protein uL14 family. In terms of assembly, part of the 50S ribosomal subunit. Forms a cluster with proteins L3 and L19. In the 70S ribosome, L14 and L19 interact and together make contacts with the 16S rRNA in bridges B5 and B8.

In terms of biological role, binds to 23S rRNA. Forms part of two intersubunit bridges in the 70S ribosome. This chain is Large ribosomal subunit protein uL14, found in Micrococcus luteus (strain ATCC 4698 / DSM 20030 / JCM 1464 / CCM 169 / CCUG 5858 / IAM 1056 / NBRC 3333 / NCIMB 9278 / NCTC 2665 / VKM Ac-2230) (Micrococcus lysodeikticus).